The chain runs to 311 residues: Fucose-specific lectin (311 aa).

Repeat copies occupy residues 1 to 53, 54 to 103, 104 to 151, 152 to 209, 210 to 256, and 257 to 311. A 6 X approximate tandem repeats region spans residues 1-311; the sequence is MSTPGAQEVL…LGRRALPPAE (311 aa). 16 residues coordinate beta-L-fucose: Arg25, Glu37, Trp44, Arg73, Glu85, Trp94, Arg126, Glu138, Trp146, Arg177, Gln189, Trp198, Arg230, Gln242, Arg277, and Glu291.

Belongs to the fungal fucose-specific lectin family. Homodimer.

Lectin that specifically binds to L-fucose and weakly reacts with mannose and N-acetyl-neuraminic acid. Has strongest preference for the alpha-1,6-fucosylated chain (core fucose) on glycoproteins among alpha-1,2-, alpha-1,3-, alpha-1,4-, and alpha-1,6-fucosylated chains. Binds to fucose residues of IgE in mice and human, causing antigen-independent IgE-mediated mast cell activation and anaphylactoid reactions in mice and is possibly implicated in allergic response to Aspergillus oryzae in humans. Induces secretion of pro-inflammatory cytokines IL6 and IL8 implicated in ocular diseases such as mycotic keratitis, probably through its interaction with host toll-like receptors TLR2 and TLR4, followed by up-regulation of pro-inflammatory cytokines. The polypeptide is Fucose-specific lectin (Aspergillus oryzae (strain ATCC 42149 / RIB 40) (Yellow koji mold)).